Reading from the N-terminus, the 472-residue chain is Sulfate adenylyltransferase subunit 1 (472 aa).

A tr-type G domain is found at lysine 22–tyrosine 239. The segment at glycine 31–serine 38 is G1. GTP is bound at residue glycine 31–serine 38. Positions glycine 89 to aspartate 93 are G2. The tract at residues aspartate 110–glycine 113 is G3. GTP-binding positions include aspartate 110–histidine 114 and asparagine 165–aspartate 168. A G4 region spans residues asparagine 165 to aspartate 168. The G5 stretch occupies residues serine 202 to leucine 204.

It belongs to the TRAFAC class translation factor GTPase superfamily. Classic translation factor GTPase family. CysN/NodQ subfamily. In terms of assembly, heterodimer composed of CysD, the smaller subunit, and CysN.

It carries out the reaction sulfate + ATP + H(+) = adenosine 5'-phosphosulfate + diphosphate. The protein operates within sulfur metabolism; hydrogen sulfide biosynthesis; sulfite from sulfate: step 1/3. With CysD forms the ATP sulfurylase (ATPS) that catalyzes the adenylation of sulfate producing adenosine 5'-phosphosulfate (APS) and diphosphate, the first enzymatic step in sulfur assimilation pathway. APS synthesis involves the formation of a high-energy phosphoric-sulfuric acid anhydride bond driven by GTP hydrolysis by CysN coupled to ATP hydrolysis by CysD. The protein is Sulfate adenylyltransferase subunit 1 of Cellvibrio japonicus (strain Ueda107) (Pseudomonas fluorescens subsp. cellulosa).